Consider the following 934-residue polypeptide: Bifunctional uridylyltransferase/uridylyl-removing enzyme (934 aa).

Positions 1-379 are uridylyltransferase; it reads MSAHDLKLEE…TFSRRKRKLS (379 aa). Residues 380-736 form a uridylyl-removing region; it reads ADGDFVSENH…AKPHTFEAVT (357 aa). The HD domain occupies 496–613; it reads VDEHLLRCIA…IDFADTVQTM (118 aa). 2 ACT domains span residues 737–819 and 848–931; these read EITV…VLAK and VIEV…RSSQ.

It belongs to the GlnD family. Mg(2+) is required as a cofactor.

It carries out the reaction [protein-PII]-L-tyrosine + UTP = [protein-PII]-uridylyl-L-tyrosine + diphosphate. The catalysed reaction is [protein-PII]-uridylyl-L-tyrosine + H2O = [protein-PII]-L-tyrosine + UMP + H(+). Uridylyltransferase (UTase) activity is inhibited by glutamine, while glutamine activates uridylyl-removing (UR) activity. Modifies, by uridylylation and deuridylylation, the PII regulatory proteins (GlnB and homologs), in response to the nitrogen status of the cell that GlnD senses through the glutamine level. Under low glutamine levels, catalyzes the conversion of the PII proteins and UTP to PII-UMP and PPi, while under higher glutamine levels, GlnD hydrolyzes PII-UMP to PII and UMP (deuridylylation). Thus, controls uridylylation state and activity of the PII proteins, and plays an important role in the regulation of nitrogen assimilation and metabolism. The chain is Bifunctional uridylyltransferase/uridylyl-removing enzyme from Brucella anthropi (strain ATCC 49188 / DSM 6882 / CCUG 24695 / JCM 21032 / LMG 3331 / NBRC 15819 / NCTC 12168 / Alc 37) (Ochrobactrum anthropi).